A 352-amino-acid polypeptide reads, in one-letter code: Proton-activated chloride channel (352 aa).

The tract at residues 1-55 is disordered; it reads MEAIRKELSRSYQELNEEAEPVAIDPEEAEDEEKEQEEAASAVAPDRDSDRSSPP. Over 1–65 the chain is Cytoplasmic; it reads MEAIRKELSR…VRFSRTCLKN (65 aa). Acidic residues predominate over residues 15–38; that stretch reads LNEEAEPVAIDPEEAEDEEKEQEE. Residues 66–86 traverse the membrane as a helical segment; it reads FFSVLLILVYLLLMGVAVFLV. Topologically, residues 87-299 are extracellular; it reads YQTITDFRDK…KDPYIQEIQD (213 aa). A helical transmembrane segment spans residues 300 to 320; it reads IITANPWSMIALLCSVFLVLF. Topologically, residues 321–352 are cytoplasmic; sequence KAADFAKLSVKWMIKVRRRHLKKRARELNHIS.

Belongs to the proton-activated chloride channel family.

The protein localises to the cell membrane. It catalyses the reaction chloride(in) = chloride(out). Chloride channel gated by pH that facilitates the entry of chloride ions into cells upon exposure to extracellular acidic pH. In Xenopus tropicalis (Western clawed frog), this protein is Proton-activated chloride channel.